Consider the following 257-residue polypeptide: UPF0246 protein YaaA (257 aa).

It belongs to the UPF0246 family.

The chain is UPF0246 protein YaaA from Salmonella arizonae (strain ATCC BAA-731 / CDC346-86 / RSK2980).